Reading from the N-terminus, the 275-residue chain is Large ribosomal subunit protein uL2 (275 aa).

Residues 222–275 (GVAMNPVDHPHGGGEGRNKGRHPTSPWGQKSKGLKTRNNKRTDSMIIRRRAKKK) are disordered. Residues 229–239 (DHPHGGGEGRN) are compositionally biased toward basic and acidic residues.

This sequence belongs to the universal ribosomal protein uL2 family. As to quaternary structure, part of the 50S ribosomal subunit. Forms a bridge to the 30S subunit in the 70S ribosome.

One of the primary rRNA binding proteins. Required for association of the 30S and 50S subunits to form the 70S ribosome, for tRNA binding and peptide bond formation. It has been suggested to have peptidyltransferase activity; this is somewhat controversial. Makes several contacts with the 16S rRNA in the 70S ribosome. The protein is Large ribosomal subunit protein uL2 of Psychrobacter arcticus (strain DSM 17307 / VKM B-2377 / 273-4).